We begin with the raw amino-acid sequence, 142 residues long: Large ribosomal subunit protein uL11 (142 aa).

The protein belongs to the universal ribosomal protein uL11 family. Part of the ribosomal stalk of the 50S ribosomal subunit. Interacts with L10 and the large rRNA to form the base of the stalk. L10 forms an elongated spine to which L12 dimers bind in a sequential fashion forming a multimeric L10(L12)X complex. One or more lysine residues are methylated.

In terms of biological role, forms part of the ribosomal stalk which helps the ribosome interact with GTP-bound translation factors. The sequence is that of Large ribosomal subunit protein uL11 from Solibacter usitatus (strain Ellin6076).